A 102-amino-acid chain; its full sequence is Large ribosomal subunit protein bL21 (102 aa).

It belongs to the bacterial ribosomal protein bL21 family. In terms of assembly, part of the 50S ribosomal subunit. Contacts protein L20.

In terms of biological role, this protein binds to 23S rRNA in the presence of protein L20. The polypeptide is Large ribosomal subunit protein bL21 (Ehrlichia canis (strain Jake)).